A 235-amino-acid polypeptide reads, in one-letter code: Ribosome maturation factor RimM (235 aa).

A compositionally biased stretch (basic and acidic residues) spans 1-19 (MKHEEANKEIGGRGAEGQR). A disordered region spans residues 1–49 (MKHEEANKEIGGRGAEGQRSKRVGGNSKIQNIQSPAPNPQPIVPNTQSP). The 81-residue stretch at 150 to 230 (EDEYHVLDLI…RIEITPPPGL (81 aa)) folds into the PRC barrel domain.

It belongs to the RimM family. Binds ribosomal protein uS19.

It is found in the cytoplasm. Functionally, an accessory protein needed during the final step in the assembly of 30S ribosomal subunit, possibly for assembly of the head region. Essential for efficient processing of 16S rRNA. May be needed both before and after RbfA during the maturation of 16S rRNA. It has affinity for free ribosomal 30S subunits but not for 70S ribosomes. In Nostoc punctiforme (strain ATCC 29133 / PCC 73102), this protein is Ribosome maturation factor RimM.